We begin with the raw amino-acid sequence, 261 residues long: NAD(P)H-quinone oxidoreductase subunit K, chloroplastic (261 aa).

The [4Fe-4S] cluster site is built by C64, C65, C129, and C160.

This sequence belongs to the complex I 20 kDa subunit family. In terms of assembly, NDH is composed of at least 16 different subunits, 5 of which are encoded in the nucleus. It depends on [4Fe-4S] cluster as a cofactor.

Its subcellular location is the plastid. It is found in the chloroplast thylakoid membrane. The catalysed reaction is a plastoquinone + NADH + (n+1) H(+)(in) = a plastoquinol + NAD(+) + n H(+)(out). The enzyme catalyses a plastoquinone + NADPH + (n+1) H(+)(in) = a plastoquinol + NADP(+) + n H(+)(out). Functionally, NDH shuttles electrons from NAD(P)H:plastoquinone, via FMN and iron-sulfur (Fe-S) centers, to quinones in the photosynthetic chain and possibly in a chloroplast respiratory chain. The immediate electron acceptor for the enzyme in this species is believed to be plastoquinone. Couples the redox reaction to proton translocation, and thus conserves the redox energy in a proton gradient. This chain is NAD(P)H-quinone oxidoreductase subunit K, chloroplastic, found in Physcomitrium patens (Spreading-leaved earth moss).